The following is a 473-amino-acid chain: Ral-GDS-related protein (473 aa).

The tract at residues 117-215 (EPNEAKPDDP…NQPSEELPDM (99 aa)) is disordered. A compositionally biased stretch (low complexity) spans 134-157 (ALTMPALEPAPPLLADLGPALEPE). A compositionally biased stretch (pro residues) spans 173–185 (GPAPAPGEGPPPG). One can recognise a Ras-GEF domain in the interval 219–471 (PPRLLAEQLT…YKLSCQLEPE (253 aa)).

Its subcellular location is the cytoplasmic vesicle. The polypeptide is Ral-GDS-related protein (RGL4) (Homo sapiens (Human)).